The following is a 621-amino-acid chain: MAEKLPTEFDVVIIGTGLPESILAAACSRSGQRVLHVDSRSYYGGNWASFSFTGLQSWLKDYQQNHDSEEGVTATWQDLIHETEEAISLRKKDETIQHTEVFCYASQDVEDSVQDTETLQRSSPLEASATPADSLDSASLPKERQSAYSTSYEVPSRHTEESDRELSLPSANVEDSLEKEKYCGDKTDMHTVSGEDKGEHKLVVQDSIEQPKRNRITYSQMVKESRRFNIDLVSKPLYSQGSLIDLLIKSNVSRYAEFKNVTRILAFWEGKVEQVPCSRADVFNSKELSMVEKRMLMKFLTFCLDYEQHSDEYQDFKQCSFSDYLKTKKLTPNLQHFILHSIAMTSESSCTTLDGLQATKNFLQCLGRFGNTPFIFPLYGHGEIPQCFCRMCAVFGGVYCLRHKVQCLVVDKDSGRCKGIIDAFGQRISANYFIVEDSYLPKETCSNVQYKQISRAVLITDQSILKTDSDQQISILVVPPLEPGTTSVRVMELCSSTMTCMKDSYLVHLTCSSSKTAREDLEPVVKQLFIPEAEAEAGKDELRKPRLLWALYFNMRDSSGVSRSSYCGLPSNVYICSGPDWGLGSEHAVKQAETLFQEIFPSEEFCPPPPNPEDIIFEAEG.

The interval 113–171 is disordered; the sequence is VQDTETLQRSSPLEASATPADSLDSASLPKERQSAYSTSYEVPSRHTEESDRELSLPSA. Polar residues predominate over residues 115–125; the sequence is DTETLQRSSPL. Residues 155–166 show a composition bias toward basic and acidic residues; it reads PSRHTEESDREL.

Belongs to the Rab GDI family. Monomer. Heterotrimer composed of RABGGTA, RABGGTB and CHML; within this trimer, RABGGTA and RABGGTB form the catalytic component B, while CHML (component A) mediates Rab protein binding. Interacts with RAB1A, RAB7A and RAB27A, but has much lower affinity for RAB1A, RAB7A and RAB27A than CHM. Interacts with the non-phosphorylated forms of RAB3A, RAB3B, RAB3C, RAB3D, RAB5B, RAB5C, RAB8A, RAB8B, RAB10, RAB12, RAB35, and RAB43.

It is found in the cytoplasm. The protein resides in the cytosol. Its function is as follows. Substrate-binding subunit (component A) of the Rab geranylgeranyltransferase (GGTase) complex. Binds unprenylated Rab proteins and presents the substrate peptide to the catalytic component B. The component A is thought to be regenerated by transferring its prenylated Rab back to the donor membrane. Less effective than CHM in supporting prenylation of Rab3 family. In Mus musculus (Mouse), this protein is Rab proteins geranylgeranyltransferase component A 2 (Chml).